The primary structure comprises 66 residues: Potassium channel toxin alpha-KTx 27.3 (66 aa).

The first 17 residues, 1–17, serve as a signal peptide directing secretion; the sequence is MKLMWLLFLCVLAFSIA.

It belongs to the short scorpion toxin superfamily. Potassium channel inhibitor family. Alpha-KTx 27 subfamily. Contains 4 disulfide bonds. As to expression, expressed by the venom gland.

It localises to the secreted. This chain is Potassium channel toxin alpha-KTx 27.3, found in Lychas mucronatus (Chinese swimming scorpion).